The following is a 614-amino-acid chain: Zinc finger and SCAN domain-containing protein 2 (614 aa).

Disordered stretches follow at residues M1–Q26 and E43–A76. In terms of domain architecture, SCAN box spans S59–L132. 14 consecutive C2H2-type zinc fingers follow at residues Y222 to H244, Y250 to H272, Y278 to H300, F306 to H328, Y334 to H356, Y362 to H384, Y390 to H412, Y418 to H440, Y446 to H468, Y474 to H496, Y502 to H524, Y530 to H552, Y558 to H580, and Y586 to H608.

The protein belongs to the krueppel C2H2-type zinc-finger protein family.

It localises to the nucleus. May be involved in transcriptional regulation during the post-meiotic stages of spermatogenesis. In Homo sapiens (Human), this protein is Zinc finger and SCAN domain-containing protein 2 (ZSCAN2).